A 256-amino-acid polypeptide reads, in one-letter code: Large ribosomal subunit protein eL8A (256 aa).

Positions 1 to 37 (MAPGKKVAPAPFGAKSTKSNKTRNPLTHSTPKNFGIG) are disordered. The span at 16-32 (STKSNKTRNPLTHSTPK) shows a compositional bias: polar residues.

The protein belongs to the eukaryotic ribosomal protein eL8 family. As to quaternary structure, component of the large ribosomal subunit (LSU). Mature yeast ribosomes consist of a small (40S) and a large (60S) subunit. The 40S small subunit contains 1 molecule of ribosomal RNA (18S rRNA) and 33 different proteins (encoded by 57 genes). The large 60S subunit contains 3 rRNA molecules (25S, 5.8S and 5S rRNA) and 46 different proteins (encoded by 81 genes).

Its subcellular location is the cytoplasm. Its function is as follows. Component of the ribosome, a large ribonucleoprotein complex responsible for the synthesis of proteins in the cell. The small ribosomal subunit (SSU) binds messenger RNAs (mRNAs) and translates the encoded message by selecting cognate aminoacyl-transfer RNA (tRNA) molecules. The large subunit (LSU) contains the ribosomal catalytic site termed the peptidyl transferase center (PTC), which catalyzes the formation of peptide bonds, thereby polymerizing the amino acids delivered by tRNAs into a polypeptide chain. The nascent polypeptides leave the ribosome through a tunnel in the LSU and interact with protein factors that function in enzymatic processing, targeting, and the membrane insertion of nascent chains at the exit of the ribosomal tunnel. The polypeptide is Large ribosomal subunit protein eL8A (Saccharomyces cerevisiae (strain ATCC 204508 / S288c) (Baker's yeast)).